The sequence spans 451 residues: Phosphoglucosamine mutase (451 aa).

Ser-102 acts as the Phosphoserine intermediate in catalysis. Positions 102, 242, 244, and 246 each coordinate Mg(2+). Ser-102 carries the phosphoserine modification.

This sequence belongs to the phosphohexose mutase family. It depends on Mg(2+) as a cofactor. Post-translationally, activated by phosphorylation.

The enzyme catalyses alpha-D-glucosamine 1-phosphate = D-glucosamine 6-phosphate. Its function is as follows. Catalyzes the conversion of glucosamine-6-phosphate to glucosamine-1-phosphate. This is Phosphoglucosamine mutase from Staphylococcus carnosus (strain TM300).